The chain runs to 183 residues: Inosine triphosphate pyrophosphatase (183 aa).

Residue 8-13 (TGNKNK) coordinates ITP. Glutamate 36 lines the Mg(2+) pocket. Residues lysine 48, 64–65 (DT), lysine 81, 140–143 (FGWD), lysine 161, and 166–167 (HR) contribute to the ITP site.

Belongs to the HAM1 NTPase family. In terms of assembly, homodimer. Requires Mg(2+) as cofactor. Mn(2+) serves as cofactor.

The protein resides in the cytoplasm. It localises to the nucleus. It catalyses the reaction ITP + H2O = IMP + diphosphate + H(+). The enzyme catalyses dITP + H2O = dIMP + diphosphate + H(+). It carries out the reaction XTP + H2O = XMP + diphosphate + H(+). Pyrophosphatase that hydrolyzes non-canonical purine nucleotides such as inosine triphosphate (ITP), deoxyinosine triphosphate (dITP) or xanthosine 5'-triphosphate (XTP) to their respective monophosphate derivatives. The enzyme does not distinguish between the deoxy- and ribose forms. Probably excludes non-canonical purines from RNA and DNA precursor pools, thus preventing their incorporation into RNA and DNA and avoiding chromosomal lesions. This is Inosine triphosphate pyrophosphatase from Emericella nidulans (strain FGSC A4 / ATCC 38163 / CBS 112.46 / NRRL 194 / M139) (Aspergillus nidulans).